Consider the following 120-residue polypeptide: Large ribosomal subunit protein uL18 (120 aa).

This sequence belongs to the universal ribosomal protein uL18 family. As to quaternary structure, part of the 50S ribosomal subunit; part of the 5S rRNA/L5/L18/L25 subcomplex. Contacts the 5S and 23S rRNAs.

Functionally, this is one of the proteins that bind and probably mediate the attachment of the 5S RNA into the large ribosomal subunit, where it forms part of the central protuberance. This Rhizobium leguminosarum bv. trifolii (strain WSM2304) protein is Large ribosomal subunit protein uL18.